Consider the following 249-residue polypeptide: ATP synthase subunit a, chloroplastic (249 aa).

5 helical membrane passes run 38–58 (GQVL…SVIA), 97–117 (VPFV…GALI), 136–156 (INTT…AGLS), 201–221 (LVVA…MMLL), and 222–242 (GLFT…AYIG).

This sequence belongs to the ATPase A chain family. As to quaternary structure, F-type ATPases have 2 components, CF(1) - the catalytic core - and CF(0) - the membrane proton channel. CF(1) has five subunits: alpha(3), beta(3), gamma(1), delta(1), epsilon(1). CF(0) has four main subunits: a, b, b' and c.

The protein localises to the plastid. The protein resides in the chloroplast thylakoid membrane. In terms of biological role, key component of the proton channel; it plays a direct role in the translocation of protons across the membrane. The chain is ATP synthase subunit a, chloroplastic from Chlorokybus atmophyticus (Soil alga).